Reading from the N-terminus, the 796-residue chain is Protein translocase subunit SecA 2 (796 aa).

ATP is bound by residues Gln-84, 102 to 106, and Asp-496; that span reads GEGKT.

The protein belongs to the SecA family. As to quaternary structure, monomer and homodimer. Part of the essential Sec protein translocation apparatus which comprises SecA, SecYEG and auxiliary proteins SecDF. Other proteins may also be involved.

The protein localises to the cell membrane. It localises to the cytoplasm. The enzyme catalyses ATP + H2O + cellular proteinSide 1 = ADP + phosphate + cellular proteinSide 2.. Part of the Sec protein translocase complex. Interacts with the SecYEG preprotein conducting channel. Has a central role in coupling the hydrolysis of ATP to the transfer of proteins into and across the cell membrane, serving as an ATP-driven molecular motor driving the stepwise translocation of polypeptide chains across the membrane. The sequence is that of Protein translocase subunit SecA 2 from Staphylococcus aureus (strain MSSA476).